Consider the following 840-residue polypeptide: Probable alpha-glucuronidase A (840 aa).

Residues 1–19 (MRSVITTLTLVASVGLAVA) form the signal peptide. Residues Asn-222, Asn-310, Asn-465, Asn-527, Asn-576, Asn-682, and Asn-732 are each glycosylated (N-linked (GlcNAc...) asparagine).

This sequence belongs to the glycosyl hydrolase 67 family.

It localises to the secreted. It carries out the reaction an alpha-D-glucuronoside + H2O = D-glucuronate + an alcohol. Functionally, alpha-glucuronidase involved in the hydrolysis of xylan, a major structural heterogeneous polysaccharide found in plant biomass representing the second most abundant polysaccharide in the biosphere, after cellulose. Releases 4-O-methylglucuronic acid from xylan. This is Probable alpha-glucuronidase A (aguA) from Aspergillus clavatus (strain ATCC 1007 / CBS 513.65 / DSM 816 / NCTC 3887 / NRRL 1 / QM 1276 / 107).